The chain runs to 116 residues: Large ribosomal subunit protein bL19 (116 aa).

The protein belongs to the bacterial ribosomal protein bL19 family.

This protein is located at the 30S-50S ribosomal subunit interface and may play a role in the structure and function of the aminoacyl-tRNA binding site. In Clostridium novyi (strain NT), this protein is Large ribosomal subunit protein bL19.